We begin with the raw amino-acid sequence, 31 residues long: Conotoxin Cltx-2 (31 aa).

A 4-hydroxyproline mark is found at proline 6 and proline 31.

Post-translationally, contains 4 disulfide bonds. As to expression, expressed by the venom duct.

The protein localises to the secreted. The polypeptide is Conotoxin Cltx-2 (Californiconus californicus (California cone)).